Here is a 197-residue protein sequence, read N- to C-terminus: MSASRFIKCVTVGDGAVGKTCMLISYTSNTFPTDYVPTVFDNFSANVVVDGSTVNLGLWDTAGQEDYNRLRPLSYRGADVFLLAFSLISKASYENVSKKWIPELRHYAPGVPIILVGTKLDLRDDKQFFVDHPGAVPISTAQGEELRKLIGAAAYIECSSKTQQNIKAVFDAAIKVVLQPPKQKKKKKKAQKGCAIL.

13-20 is a GTP binding site; it reads GDGAVGKT. The short motif at 35–43 is the Effector region element; the sequence is YVPTVFDNF. GTP-binding positions include 60–64 and 118–121; these read DTAGQ and TKLD. A Cysteine methyl ester modification is found at Cys194. Cys194 is lipidated: S-geranylgeranyl cysteine. Residues 195 to 197 constitute a propeptide, removed in mature form; sequence AIL.

Belongs to the small GTPase superfamily. Rho family.

Its subcellular location is the cytoplasm. It is found in the membrane. Functionally, inactive GDP-bound Rho GTPases reside in the cytosol, are found in a complex with Rho GDP-dissociation inhibitors (Rho GDIs), and are released from the GDI protein in order to translocate to membranes upon activation. In Oryza sativa subsp. japonica (Rice), this protein is Rac-like GTP-binding protein 5 (RAC5).